The chain runs to 235 residues: Eukaryotic translation initiation factor 4E-1 (235 aa).

A disordered region spans residues 1–52; sequence MVVEDSMKATSAEDLSNSIANQNPRGRGGDEDEELEEGEIVGDDDLDSSNLS. Polar residues predominate over residues 13 to 24; the sequence is EDLSNSIANQNP. Positions 30-47 are enriched in acidic residues; it reads DEDEELEEGEIVGDDDLD. EIF4G-binding regions lie at residues 60 to 63 and 70 to 106; these read HPLE and FDNP…NNIH. MRNA contacts are provided by residues 78–83, K110, and 128–129; these read KQATWG and WE. A disulfide bond links C133 and C171. Positions 154–163 are EIF4G-binding; it reads YTLLAMIGEQ. MRNA is bound by residues 178–183 and 223–227; these read RSGQDK and KKFDR.

The protein belongs to the eukaryotic initiation factor 4E family. As to quaternary structure, EIF4F is a multi-subunit complex, the composition of which varies with external and internal environmental conditions. It is composed of at least EIF4A, EIF4E and EIF4G. EIF4E is also known to interact with other partners. Interacts directly with eIF4G. In higher plants two isoforms of EIF4F have been identified, named isoform EIF4F and isoform EIF(iso)4F. Isoform EIF4F has subunits p220 and p26, whereas isoform EIF(iso)4F has subunits p82 and p28. In terms of assembly, (Microbial infection) Interacts with potyvirus viral genome-linked protein (VPg); this interaction is possible in susceptible hosts but impaired in resistant plants. Post-translationally, according to the redox status, the Cys-133-Cys-171 disulfide bridge may have a role in regulating protein function by affecting its ability to bind capped mRNA.

The protein resides in the nucleus. It is found in the cytoplasm. Component of the protein complex eIF4F, which is involved in the recognition of the mRNA cap, ATP-dependent unwinding of 5'-terminal secondary structure and recruitment of mRNA to the ribosome. Recognizes and binds the 7-methylguanosine-containing mRNA cap during an early step in the initiation of protein synthesis and facilitates ribosome binding by inducing the unwinding of the mRNAs secondary structures. Key component of recessive resistance to potyviruses and Tombusviridae genus Carmovirus such as melon necrotic spot virus (MNSV). Its function is as follows. (Microbial infection) Susceptibility host factor required for viral infection by recruiting viral RNAs, including uncapped and non-polyadenylated RNA, to the host ribosomal complex via an interaction with viral genome-linked protein (VPg). This is Eukaryotic translation initiation factor 4E-1 from Cucumis melo (Muskmelon).